A 154-amino-acid polypeptide reads, in one-letter code: Endoribonuclease YbeY (154 aa).

Residues H116, H120, and H126 each contribute to the Zn(2+) site.

Belongs to the endoribonuclease YbeY family. The cofactor is Zn(2+).

Its subcellular location is the cytoplasm. Its function is as follows. Single strand-specific metallo-endoribonuclease involved in late-stage 70S ribosome quality control and in maturation of the 3' terminus of the 16S rRNA. The chain is Endoribonuclease YbeY from Chromohalobacter salexigens (strain ATCC BAA-138 / DSM 3043 / CIP 106854 / NCIMB 13768 / 1H11).